Reading from the N-terminus, the 216-residue chain is ATP-dependent Clp protease proteolytic subunit (216 aa).

The Nucleophile role is filled by S101. The active site involves H126.

Belongs to the peptidase S14 family. In terms of assembly, component of the chloroplastic Clp protease core complex.

The protein resides in the plastid. It localises to the chloroplast stroma. The catalysed reaction is Hydrolysis of proteins to small peptides in the presence of ATP and magnesium. alpha-casein is the usual test substrate. In the absence of ATP, only oligopeptides shorter than five residues are hydrolyzed (such as succinyl-Leu-Tyr-|-NHMec, and Leu-Tyr-Leu-|-Tyr-Trp, in which cleavage of the -Tyr-|-Leu- and -Tyr-|-Trp bonds also occurs).. Functionally, cleaves peptides in various proteins in a process that requires ATP hydrolysis. Has a chymotrypsin-like activity. Plays a major role in the degradation of misfolded proteins. This Hordeum vulgare (Barley) protein is ATP-dependent Clp protease proteolytic subunit.